Reading from the N-terminus, the 348-residue chain is Spore development regulator vosA (348 aa).

A Velvet domain is found at 46-244 (ALSPSSCFLS…SDQGVRLRLR (199 aa)). Residues 250-294 (MMSNKRSISGSGDLTSDQSQQQQQQQPLAKKRREDSVESANPSSL) form a disordered region. The span at 253-266 (NKRSISGSGDLTSD) shows a compositional bias: polar residues. Residues 274-280 (QQPLAKK) carry the Nuclear localization signal motif.

The protein belongs to the velvet family. VosA subfamily. As to quaternary structure, forms a heterodimeric complex with VEL2; the formation of the VEL2-VOS1 complex is light-dependent.

It localises to the nucleus. Component of the velB-VosA heterodimeric complex that plays a dual role in activating genes associated with spore maturation and repressing certain development-associated genes. The complex binds DNA through the DNA-binding domain of vosA that recognizes an 11-nucleotide consensus sequence 5'-CTGGCCGCGGC-3' consisting of two motifs in the promoters of key developmental regulatory genes. Regulates spore viability, trehalose accumulation, and tolerance to thermal and oxidative as well as ion stresses. Positively regulates conidial pigmentation and pathogenicity on barley. The polypeptide is Spore development regulator vosA (Cochliobolus sativus (strain ND90Pr / ATCC 201652) (Common root rot and spot blotch fungus)).